A 372-amino-acid polypeptide reads, in one-letter code: Queuine tRNA-ribosyltransferase (372 aa).

The active-site Proton acceptor is aspartate 90. Residues 90–94 (DSGGF), aspartate 144, glutamine 193, and glycine 220 each bind substrate. Residues 251–257 (GVGTPED) are RNA binding. The active-site Nucleophile is aspartate 270. Positions 275–279 (TRNAR) are RNA binding; important for wobble base 34 recognition. Positions 308, 310, 313, and 339 each coordinate Zn(2+).

Belongs to the queuine tRNA-ribosyltransferase family. As to quaternary structure, homodimer. Within each dimer, one monomer is responsible for RNA recognition and catalysis, while the other monomer binds to the replacement base PreQ1. It depends on Zn(2+) as a cofactor.

It carries out the reaction 7-aminomethyl-7-carbaguanine + guanosine(34) in tRNA = 7-aminomethyl-7-carbaguanosine(34) in tRNA + guanine. Its pathway is tRNA modification; tRNA-queuosine biosynthesis. Its function is as follows. Catalyzes the base-exchange of a guanine (G) residue with the queuine precursor 7-aminomethyl-7-deazaguanine (PreQ1) at position 34 (anticodon wobble position) in tRNAs with GU(N) anticodons (tRNA-Asp, -Asn, -His and -Tyr). Catalysis occurs through a double-displacement mechanism. The nucleophile active site attacks the C1' of nucleotide 34 to detach the guanine base from the RNA, forming a covalent enzyme-RNA intermediate. The proton acceptor active site deprotonates the incoming PreQ1, allowing a nucleophilic attack on the C1' of the ribose to form the product. After dissociation, two additional enzymatic reactions on the tRNA convert PreQ1 to queuine (Q), resulting in the hypermodified nucleoside queuosine (7-(((4,5-cis-dihydroxy-2-cyclopenten-1-yl)amino)methyl)-7-deazaguanosine). This chain is Queuine tRNA-ribosyltransferase, found in Campylobacter hominis (strain ATCC BAA-381 / DSM 21671 / CCUG 45161 / LMG 19568 / NCTC 13146 / CH001A).